The following is a 274-amino-acid chain: Large ribosomal subunit protein uL2cz/uL2cy (274 aa).

2 disordered regions span residues 1-22 (MAIN…DSQV) and 224-274 (NPVD…RRSK).

It belongs to the universal ribosomal protein uL2 family. As to quaternary structure, part of the 50S ribosomal subunit.

The protein localises to the plastid. It localises to the chloroplast. This chain is Large ribosomal subunit protein uL2cz/uL2cy (rpl2-A), found in Helianthus annuus (Common sunflower).